The sequence spans 264 residues: Hydroxyethylthiazole kinase (264 aa).

Position 43 (Met-43) interacts with substrate. Positions 119 and 165 each coordinate ATP. Gly-192 lines the substrate pocket.

Belongs to the Thz kinase family. Mg(2+) serves as cofactor.

It carries out the reaction 5-(2-hydroxyethyl)-4-methylthiazole + ATP = 4-methyl-5-(2-phosphooxyethyl)-thiazole + ADP + H(+). It functions in the pathway cofactor biosynthesis; thiamine diphosphate biosynthesis; 4-methyl-5-(2-phosphoethyl)-thiazole from 5-(2-hydroxyethyl)-4-methylthiazole: step 1/1. Catalyzes the phosphorylation of the hydroxyl group of 4-methyl-5-beta-hydroxyethylthiazole (THZ). This Anoxybacillus flavithermus (strain DSM 21510 / WK1) protein is Hydroxyethylthiazole kinase.